The sequence spans 476 residues: Adenylyl cyclase-associated protein 2 (476 aa).

The segment at 223–322 (SILSSGPGLP…KSNSPQKHTP (100 aa)) is disordered. Over residues 230–247 (GLPPPPPPPPPPGPPPPF) the composition is skewed to pro residues. Over residues 288 to 299 (KNPSLRAQGQIR) the composition is skewed to polar residues. Residues S300 and S308 each carry the phosphoserine modification. Positions 300 to 317 (SPTKTHTPSPTSPKSNSP) are enriched in low complexity. Residues 317–454 (PQKHTPVLEL…QDDDYREFPI (138 aa)) form the C-CAP/cofactor C-like domain.

Belongs to the CAP family. In terms of tissue distribution, expressed in the heart, skeletal muscle, and brain.

Its subcellular location is the cell membrane. Functionally, involved in the regulation of actin polymerization. The polypeptide is Adenylyl cyclase-associated protein 2 (Cap2) (Mus musculus (Mouse)).